We begin with the raw amino-acid sequence, 736 residues long: Probable beta-glucosidase L (736 aa).

The N-terminal stretch at 1–21 (MNYRVPSLKATALAMAALTQA) is a signal peptide. An N-linked (GlcNAc...) asparagine glycan is attached at Asn224. The active site involves Asp252. Asn295, Asn363, Asn429, and Asn607 each carry an N-linked (GlcNAc...) asparagine glycan.

This sequence belongs to the glycosyl hydrolase 3 family.

The protein localises to the secreted. The catalysed reaction is Hydrolysis of terminal, non-reducing beta-D-glucosyl residues with release of beta-D-glucose.. It functions in the pathway glycan metabolism; cellulose degradation. Beta-glucosidases are one of a number of cellulolytic enzymes involved in the degradation of cellulosic biomass. Catalyzes the last step releasing glucose from the inhibitory cellobiose. In Aspergillus terreus (strain NIH 2624 / FGSC A1156), this protein is Probable beta-glucosidase L (bglL).